We begin with the raw amino-acid sequence, 351 residues long: Hydroxymethylglutaryl-CoA synthase (351 aa).

Glu80 (proton donor/acceptor) is an active-site residue. The Acyl-thioester intermediate role is filled by Cys112. (3S)-3-hydroxy-3-methylglutaryl-CoA contacts are provided by Cys112 and Ser153. A CoA-binding site is contributed by Arg199. (3S)-3-hydroxy-3-methylglutaryl-CoA-binding residues include Thr201 and His234. The active-site Proton donor/acceptor is the His234. Lys239 contributes to the CoA binding site. Residues Arg243, Asn266, and Ser296 each coordinate (3S)-3-hydroxy-3-methylglutaryl-CoA.

Belongs to the thiolase-like superfamily. Archaeal HMG-CoA synthase family. In terms of assembly, interacts with acetoacetyl-CoA thiolase that catalyzes the precedent step in the pathway and with a DUF35 protein. The acetoacetyl-CoA thiolase/HMG-CoA synthase complex channels the intermediate via a fused CoA-binding site, which allows for efficient coupling of the endergonic thiolase reaction with the exergonic HMGCS reaction.

The enzyme catalyses acetoacetyl-CoA + acetyl-CoA + H2O = (3S)-3-hydroxy-3-methylglutaryl-CoA + CoA + H(+). It participates in metabolic intermediate biosynthesis; (R)-mevalonate biosynthesis; (R)-mevalonate from acetyl-CoA: step 2/3. Catalyzes the condensation of acetyl-CoA with acetoacetyl-CoA to form 3-hydroxy-3-methylglutaryl-CoA (HMG-CoA). Functions in the mevalonate (MVA) pathway leading to isopentenyl diphosphate (IPP), a key precursor for the biosynthesis of isoprenoid compounds that are building blocks of archaeal membrane lipids. In Thermoplasma acidophilum (strain ATCC 25905 / DSM 1728 / JCM 9062 / NBRC 15155 / AMRC-C165), this protein is Hydroxymethylglutaryl-CoA synthase.